The sequence spans 337 residues: N-acetyl-gamma-glutamyl-phosphate reductase (337 aa).

Cys149 is an active-site residue.

This sequence belongs to the NAGSA dehydrogenase family. Type 1 subfamily.

The protein resides in the cytoplasm. It catalyses the reaction N-acetyl-L-glutamate 5-semialdehyde + phosphate + NADP(+) = N-acetyl-L-glutamyl 5-phosphate + NADPH + H(+). It participates in amino-acid biosynthesis; L-arginine biosynthesis; N(2)-acetyl-L-ornithine from L-glutamate: step 3/4. Functionally, catalyzes the NADPH-dependent reduction of N-acetyl-5-glutamyl phosphate to yield N-acetyl-L-glutamate 5-semialdehyde. This chain is N-acetyl-gamma-glutamyl-phosphate reductase, found in Wolinella succinogenes (strain ATCC 29543 / DSM 1740 / CCUG 13145 / JCM 31913 / LMG 7466 / NCTC 11488 / FDC 602W) (Vibrio succinogenes).